The chain runs to 619 residues: Dihydroxy-acid dehydratase (619 aa).

Asp-81 is a Mg(2+) binding site. Position 122 (Cys-122) interacts with [2Fe-2S] cluster. Mg(2+) contacts are provided by Asp-123 and Lys-124. Lys-124 carries the N6-carboxylysine modification. Cys-195 serves as a coordination point for [2Fe-2S] cluster. Mg(2+) is bound at residue Glu-494. Ser-520 serves as the catalytic Proton acceptor.

This sequence belongs to the IlvD/Edd family. As to quaternary structure, homodimer. [2Fe-2S] cluster is required as a cofactor. The cofactor is Mg(2+).

It carries out the reaction (2R)-2,3-dihydroxy-3-methylbutanoate = 3-methyl-2-oxobutanoate + H2O. The catalysed reaction is (2R,3R)-2,3-dihydroxy-3-methylpentanoate = (S)-3-methyl-2-oxopentanoate + H2O. The protein operates within amino-acid biosynthesis; L-isoleucine biosynthesis; L-isoleucine from 2-oxobutanoate: step 3/4. Its pathway is amino-acid biosynthesis; L-valine biosynthesis; L-valine from pyruvate: step 3/4. Functions in the biosynthesis of branched-chain amino acids. Catalyzes the dehydration of (2R,3R)-2,3-dihydroxy-3-methylpentanoate (2,3-dihydroxy-3-methylvalerate) into 2-oxo-3-methylpentanoate (2-oxo-3-methylvalerate) and of (2R)-2,3-dihydroxy-3-methylbutanoate (2,3-dihydroxyisovalerate) into 2-oxo-3-methylbutanoate (2-oxoisovalerate), the penultimate precursor to L-isoleucine and L-valine, respectively. In Shewanella oneidensis (strain ATCC 700550 / JCM 31522 / CIP 106686 / LMG 19005 / NCIMB 14063 / MR-1), this protein is Dihydroxy-acid dehydratase.